The sequence spans 192 residues: Xanthine phosphoribosyltransferase 2 (192 aa).

Xanthine contacts are provided by leucine 20 and asparagine 27. Residue 131–135 (ANACA) participates in 5-phospho-alpha-D-ribose 1-diphosphate binding. Lysine 159 contacts xanthine.

The protein belongs to the purine/pyrimidine phosphoribosyltransferase family. Xpt subfamily. Homodimer.

The protein resides in the cytoplasm. It catalyses the reaction XMP + diphosphate = xanthine + 5-phospho-alpha-D-ribose 1-diphosphate. Its pathway is purine metabolism; XMP biosynthesis via salvage pathway; XMP from xanthine: step 1/1. Its function is as follows. Converts the preformed base xanthine, a product of nucleic acid breakdown, to xanthosine 5'-monophosphate (XMP), so it can be reused for RNA or DNA synthesis. The chain is Xanthine phosphoribosyltransferase 2 from Clostridium perfringens (strain ATCC 13124 / DSM 756 / JCM 1290 / NCIMB 6125 / NCTC 8237 / Type A).